Reading from the N-terminus, the 592-residue chain is Keratin, type II cytoskeletal 5 (592 aa).

Residues 1 to 18 (MSRQSSVSFRSGGSRSFS) are compositionally biased toward low complexity. Positions 1–20 (MSRQSSVSFRSGGSRSFSTA) are disordered. The interval 1–169 (MSRQSSVSFR…DPSIQRVRTE (169 aa)) is head. Phosphoserine occurs at positions 5, 8, 16, and 21. Phosphothreonine; by CDK1 is present on Thr-24. Ser-26, Ser-36, Ser-50, Ser-64, Ser-71, Ser-75, and Ser-82 each carry phosphoserine. A Phosphothreonine; by CDK1 modification is found at Thr-153. Phosphothreonine; by AURKB is present on Thr-168. Residues 170–205 (EREQIKTLNNKFASFIDKVRFLEQQNKVLDTKWTLL) form a coil 1A region. Residues 170 to 483 (EREQIKTLNN…KLLEGEECRL (314 aa)) form the IF rod domain. Positions 206–224 (QEQGTKTVRQNLEPLFEQY) are linker 1. A coil 1B region spans residues 225–317 (INNLRRQLDS…FFDAELSQMQ (93 aa)). The linker 12 stretch occupies residues 318-340 (THVSDTSVVLSMDNNRNLDLDSI). Residues 341 to 479 (IAEVKAQYEE…ATYRKLLEGE (139 aa)) form a coil 2 region. The segment at 480–592 (ECRLSGEGVG…TSSSRKSFKS (113 aa)) is tail. The interval 568–592 (GSGGGSSSSVKFVSTTSSSRKSFKS) is disordered. Over residues 574–592 (SSSVKFVSTTSSSRKSFKS) the composition is skewed to low complexity.

The protein belongs to the intermediate filament family. As to quaternary structure, heterodimer of a type I and a type II keratin. Heterodimer with type I keratin KRT25 leading to the formation of keratin intermediate filament (KIF) network. Forms a heterodimer (via 2B domains) with KRT14 (via 2B domains). Interacts with TCHP. Interacts with EPPK1. Interacts with AMELX. Interacts with PKP1 (via N-terminus) and PKP2. Phosphorylated by CDK1, AURKB and Rho-kinase, phosphorylation is regulated by the cell cycle. Thr-24 phosphorylation, mediated by CDK1, peaks during prometaphase or metaphase cells with phosphorylated filamentous structures evident throughout the cytoplasm during early mitosis. CDK1 phosphorylates Thr-24 in mitotic cells at the site of injury. Post-translationally, O-glycosylated.

The protein resides in the cytoplasm. Required for the formation of keratin intermediate filaments in the basal epidermis and maintenance of the skin barrier in response to mechanical stress. Regulates the recruitment of Langerhans cells to the epidermis, potentially by modulation of the abundance of macrophage chemotactic cytokines, macrophage inflammatory cytokines and CTNND1 localization in keratinocytes. The chain is Keratin, type II cytoskeletal 5 (KRT5) from Pan troglodytes (Chimpanzee).